We begin with the raw amino-acid sequence, 102 residues long: Integration host factor subunit alpha (102 aa).

The interval 49–70 is disordered; the sequence is FGNFQLRTKPQRPGRNPKTGEE.

This sequence belongs to the bacterial histone-like protein family. In terms of assembly, heterodimer of an alpha and a beta chain.

In terms of biological role, this protein is one of the two subunits of integration host factor, a specific DNA-binding protein that functions in genetic recombination as well as in transcriptional and translational control. This is Integration host factor subunit alpha from Nitrosomonas europaea (strain ATCC 19718 / CIP 103999 / KCTC 2705 / NBRC 14298).